The primary structure comprises 911 residues: Protein translocase subunit SecA (911 aa).

ATP contacts are provided by residues glutamine 86, 104–108 (GEGKT), and aspartate 512. The tract at residues 869–888 (ALADDGQPQGAQPVRNVLPK) is disordered. Zn(2+) is bound by residues cysteine 895, cysteine 897, cysteine 906, and histidine 907.

This sequence belongs to the SecA family. In terms of assembly, monomer and homodimer. Part of the essential Sec protein translocation apparatus which comprises SecA, SecYEG and auxiliary proteins SecDF-YajC and YidC. The cofactor is Zn(2+).

It localises to the cell inner membrane. The protein localises to the cytoplasm. It carries out the reaction ATP + H2O + cellular proteinSide 1 = ADP + phosphate + cellular proteinSide 2.. Functionally, part of the Sec protein translocase complex. Interacts with the SecYEG preprotein conducting channel. Has a central role in coupling the hydrolysis of ATP to the transfer of proteins into and across the cell membrane, serving both as a receptor for the preprotein-SecB complex and as an ATP-driven molecular motor driving the stepwise translocation of polypeptide chains across the membrane. The protein is Protein translocase subunit SecA of Bordetella parapertussis (strain 12822 / ATCC BAA-587 / NCTC 13253).